The sequence spans 984 residues: Rhoptry neck protein 4 (984 aa).

An N-terminal signal peptide occupies residues 1-26 (MAIKNTLTGSGLLVLLTLACGTTVQS). Positions 24 to 300 (VQSSPPTPAP…TPIPASKGIY (277 aa)) are disordered. Composition is skewed to polar residues over residues 66 to 85 (PQKTASQSSLAPTGDNNSKV) and 92 to 105 (SDTTPRSAEGTSES). Asn-81 carries an N-linked (GlcNAc...) asparagine glycan. Pro residues predominate over residues 106–117 (PPVPQLGTPPRP). Copy 1 of the repeat occupies 129–172 (QPPTAAPRTSRSVDTGSGSDASTEQQAGGQKVVTPIPASKGIYP). Residues 135-156 (PRTSRSVDTGSGSDASTEQQAG) are compositionally biased toward polar residues. The segment covering 214-228 (TGRRRAKARNRKRHP) has biased composition (basic residues). The span at 242–285 (QPPTTASRPSNGEGESQPPTAAPRTSRSVDTGSGSDASTEQQAG) shows a compositional bias: polar residues. Repeat unit 2 spans residues 258–301 (QPPTAAPRTSRSVDTGSGSDASTEQQAGGQKVVTPIPASKGIYP). N-linked (GlcNAc...) asparagine glycans are attached at residues Asn-390 and Asn-780. The interval 882 to 984 (GPTVSDESRR…EESTSKTSEL (103 aa)) is disordered. Residues 892 to 901 (MIHPVRHRSR) show a composition bias toward basic residues. The span at 902-914 (TAPSSEAASTAAE) shows a compositional bias: low complexity. A glycan (N-linked (GlcNAc...) asparagine) is linked at Asn-925. The span at 967 to 984 (LKQSDTLIEESTSKTSEL) shows a compositional bias: polar residues.

The protein resides in the secreted. Its subcellular location is the parasitophorous vacuole membrane. This chain is Rhoptry neck protein 4 (RON4), found in Toxoplasma gondii.